Here is a 930-residue protein sequence, read N- to C-terminus: Translation initiation factor IF-2 (930 aa).

Over residues 50–67 the composition is skewed to low complexity; it reads FKPAAAPKVEAKPAAPKV. 2 disordered regions span residues 50 to 217 and 260 to 346; these read FKPA…SSEE and EVVP…HELP. 2 stretches are compositionally biased toward basic and acidic residues: residues 68-90 and 110-125; these read SAEK…EAKP and FKAE…AERR. Positions 129 to 141 are enriched in low complexity; it reads KGNNRDQQQNGNR. Composition is skewed to basic and acidic residues over residues 157 to 167 and 262 to 295; these read RDNRRFNDQAK and VPEK…DGPR. The segment covering 309-318 has biased composition (low complexity); the sequence is NQKNSNWNNN. Basic and acidic residues predominate over residues 337 to 346; sequence VTERKFHELP. The region spanning 432–599 is the tr-type G domain; that stretch reads ERPPVVTIMG…TVLLVAEIQE (168 aa). A G1 region spans residues 441 to 448; it reads GHVDHGKT. 441–448 provides a ligand contact to GTP; it reads GHVDHGKT. The segment at 466–470 is G2; it reads GITQH. The segment at 487-490 is G3; it reads DTPG. Residues 487 to 491 and 541 to 544 contribute to the GTP site; these read DTPGH and NKID. The G4 stretch occupies residues 541-544; it reads NKID. The G5 stretch occupies residues 577 to 579; that stretch reads SAK.

Belongs to the TRAFAC class translation factor GTPase superfamily. Classic translation factor GTPase family. IF-2 subfamily.

The protein localises to the cytoplasm. One of the essential components for the initiation of protein synthesis. Protects formylmethionyl-tRNA from spontaneous hydrolysis and promotes its binding to the 30S ribosomal subunits. Also involved in the hydrolysis of GTP during the formation of the 70S ribosomal complex. This is Translation initiation factor IF-2 from Streptococcus pneumoniae (strain ATCC 700669 / Spain 23F-1).